The chain runs to 129 residues: Profilin-4 (129 aa).

The protein belongs to the profilin family.

The protein resides in the cytoplasm. Functionally, involved in male fertility. Required for manchette development and acrosome biogenesis during spermiogenesis. Binds in vitro to phospholipids, including phosphatidylinositol 3-phosphate (PtdIns(3)P), phosphatidylinositol 4,5-bisphosphate (PtdIns(4,5)P2), phosphatidylinositol 4-phosphate (PtdIns(4)P) and phosphatidic acid (PA). Contrary to other profilin family members, does not bind to actin in vitro. The chain is Profilin-4 (PFN4) from Bos taurus (Bovine).